Here is a 371-residue protein sequence, read N- to C-terminus: Queuine tRNA-ribosyltransferase (371 aa).

The active-site Proton acceptor is the Asp89. Substrate is bound by residues 89 to 93 (DSGGF), Asp143, Gln185, and Gly212. Residues 243-249 (GVGKPED) form an RNA binding region. Asp262 acts as the Nucleophile in catalysis. The tract at residues 267-271 (TRNAR) is RNA binding; important for wobble base 34 recognition. 4 residues coordinate Zn(2+): Cys300, Cys302, Cys305, and His331.

It belongs to the queuine tRNA-ribosyltransferase family. Homodimer. Within each dimer, one monomer is responsible for RNA recognition and catalysis, while the other monomer binds to the replacement base PreQ1. It depends on Zn(2+) as a cofactor.

It catalyses the reaction 7-aminomethyl-7-carbaguanine + guanosine(34) in tRNA = 7-aminomethyl-7-carbaguanosine(34) in tRNA + guanine. It functions in the pathway tRNA modification; tRNA-queuosine biosynthesis. Catalyzes the base-exchange of a guanine (G) residue with the queuine precursor 7-aminomethyl-7-deazaguanine (PreQ1) at position 34 (anticodon wobble position) in tRNAs with GU(N) anticodons (tRNA-Asp, -Asn, -His and -Tyr). Catalysis occurs through a double-displacement mechanism. The nucleophile active site attacks the C1' of nucleotide 34 to detach the guanine base from the RNA, forming a covalent enzyme-RNA intermediate. The proton acceptor active site deprotonates the incoming PreQ1, allowing a nucleophilic attack on the C1' of the ribose to form the product. After dissociation, two additional enzymatic reactions on the tRNA convert PreQ1 to queuine (Q), resulting in the hypermodified nucleoside queuosine (7-(((4,5-cis-dihydroxy-2-cyclopenten-1-yl)amino)methyl)-7-deazaguanosine). The chain is Queuine tRNA-ribosyltransferase from Thioalkalivibrio sulfidiphilus (strain HL-EbGR7).